The chain runs to 88 residues: Large ribosomal subunit protein bL31B (88 aa).

It belongs to the bacterial ribosomal protein bL31 family. Type B subfamily. Part of the 50S ribosomal subunit.

The sequence is that of Large ribosomal subunit protein bL31B from Herminiimonas arsenicoxydans.